The sequence spans 348 residues: tRNA N6-adenosine threonylcarbamoyltransferase (348 aa).

2 residues coordinate Fe cation: His116 and His120. Residues 138–142 (QVSGG), Asp171, Gly184, Asp188, and Asn277 contribute to the substrate site. Asp309 is a binding site for Fe cation.

It belongs to the KAE1 / TsaD family. The cofactor is Fe(2+).

The protein resides in the cytoplasm. It catalyses the reaction L-threonylcarbamoyladenylate + adenosine(37) in tRNA = N(6)-L-threonylcarbamoyladenosine(37) in tRNA + AMP + H(+). Functionally, required for the formation of a threonylcarbamoyl group on adenosine at position 37 (t(6)A37) in tRNAs that read codons beginning with adenine. Is involved in the transfer of the threonylcarbamoyl moiety of threonylcarbamoyl-AMP (TC-AMP) to the N6 group of A37, together with TsaE and TsaB. TsaD likely plays a direct catalytic role in this reaction. The sequence is that of tRNA N6-adenosine threonylcarbamoyltransferase from Lactobacillus johnsonii (strain CNCM I-12250 / La1 / NCC 533).